The chain runs to 91 residues: Long neurotoxin OH-37 (91 aa).

A signal peptide spans 1-21 (MKTLLLTLVVMTIVCLDLGYS). 5 disulfides stabilise this stretch: Cys-24/Cys-41, Cys-34/Cys-62, Cys-47/Cys-51, Cys-66/Cys-77, and Cys-78/Cys-83.

It belongs to the three-finger toxin family. Long-chain subfamily. Type II alpha-neurotoxin sub-subfamily. Expressed by the venom gland.

It is found in the secreted. Its function is as follows. Binds with high affinity to muscular (alpha-1/CHRNA1) and neuronal (alpha-7/CHRNA7) nicotinic acetylcholine receptor (nAChR) and inhibits acetylcholine from binding to the receptor, thereby impairing neuromuscular and neuronal transmission. This Ophiophagus hannah (King cobra) protein is Long neurotoxin OH-37.